The primary structure comprises 503 residues: Cobyric acid synthase (503 aa).

The region spanning 255 to 444 (AIDVAVIRCP…MHDLFHNDAF (190 aa)) is the GATase cobBQ-type domain. The active-site Nucleophile is Cys337. His436 is an active-site residue.

It belongs to the CobB/CobQ family. CobQ subfamily.

The protein operates within cofactor biosynthesis; adenosylcobalamin biosynthesis. Catalyzes amidations at positions B, D, E, and G on adenosylcobyrinic A,C-diamide. NH(2) groups are provided by glutamine, and one molecule of ATP is hydrogenolyzed for each amidation. The sequence is that of Cobyric acid synthase from Geobacillus kaustophilus (strain HTA426).